We begin with the raw amino-acid sequence, 245 residues long: uncharacterized protein (245 aa).

Positions 33–176 (QRAAYQQVQA…SSQRDMLTAT (144 aa)) form a coiled coil.

This is an uncharacterized protein from Mycobacterium tuberculosis (strain CDC 1551 / Oshkosh).